The sequence spans 233 residues: Ribose-5-phosphate isomerase A (233 aa).

Substrate-binding positions include 28 to 31, 85 to 88, and 98 to 101; these read TGST, DGAD, and KGLG. Catalysis depends on E107, which acts as the Proton acceptor. Position 125 (K125) interacts with substrate.

The protein belongs to the ribose 5-phosphate isomerase family. Homodimer.

It carries out the reaction aldehydo-D-ribose 5-phosphate = D-ribulose 5-phosphate. Its pathway is carbohydrate degradation; pentose phosphate pathway; D-ribose 5-phosphate from D-ribulose 5-phosphate (non-oxidative stage): step 1/1. Functionally, catalyzes the reversible conversion of ribose-5-phosphate to ribulose 5-phosphate. This is Ribose-5-phosphate isomerase A from Roseiflexus sp. (strain RS-1).